Here is a 137-residue protein sequence, read N- to C-terminus: Cellular retinoic acid-binding protein 1 (137 aa).

Residues 21 to 31 (KALGVNAMLRK) carry the Nuclear localization signal motif. 132-134 (RIY) serves as a coordination point for all-trans-retinoate.

The protein belongs to the calycin superfamily. Fatty-acid binding protein (FABP) family.

Its subcellular location is the cytoplasm. Functionally, cytosolic CRABPs may regulate the access of retinoic acid to the nuclear retinoic acid receptors. This is Cellular retinoic acid-binding protein 1 (CRABP1) from Gallus gallus (Chicken).